Reading from the N-terminus, the 50-residue chain is Sperm protamine P1 (50 aa).

Belongs to the protamine P1 family. Testis.

It is found in the nucleus. The protein resides in the chromosome. Protamines substitute for histones in the chromatin of sperm during the haploid phase of spermatogenesis. They compact sperm DNA into a highly condensed, stable and inactive complex. This is Sperm protamine P1 (PRM1) from Chilonatalus micropus (Cuban funnel-eared bat).